A 690-amino-acid polypeptide reads, in one-letter code: Elongation factor G (690 aa).

A tr-type G domain is found at 8 to 283; the sequence is SKCRNIGIMA…AVVDFLPAPN (276 aa). Residues 17–24, 81–85, and 135–138 each bind GTP; these read AHIDAGKT, DTPGH, and NKMD.

This sequence belongs to the TRAFAC class translation factor GTPase superfamily. Classic translation factor GTPase family. EF-G/EF-2 subfamily.

It is found in the cytoplasm. Catalyzes the GTP-dependent ribosomal translocation step during translation elongation. During this step, the ribosome changes from the pre-translocational (PRE) to the post-translocational (POST) state as the newly formed A-site-bound peptidyl-tRNA and P-site-bound deacylated tRNA move to the P and E sites, respectively. Catalyzes the coordinated movement of the two tRNA molecules, the mRNA and conformational changes in the ribosome. This chain is Elongation factor G, found in Ehrlichia canis (strain Jake).